The following is an 852-amino-acid chain: Kinesin-like protein KIF18B (852 aa).

The region spanning 7–351 (TLQVVVRVRP…LKYADRAKEI (345 aa)) is the Kinesin motor domain. 109-116 (GATGAGKT) lines the ATP pocket. Positions 366-393 (ISQYATICQQLQAEVAALRKKLQVYEGG) form a coiled coil. Disordered regions lie at residues 390 to 424 (YEGGGQPPPQDLPGSPKSGPPPEHQPCTPELPAGP) and 437 to 485 (QVER…RLTL). At serine 404 the chain carries Phosphoserine. Threonine 417 is subject to Phosphothreonine. Positions 451–461 (QSPEDEDEGPA) are enriched in acidic residues. A phosphoserine mark is found at serine 452, serine 480, and serine 558. 2 disordered regions span residues 575-594 (IPVPSPLCPEPPGYTGPVTR) and 602-689 (GPLH…SPRV). Over residues 577–588 (VPSPLCPEPPGY) the composition is skewed to pro residues. The Nuclear localization signal motif lies at 624–632 (PMEKKRRRP). Phosphoserine occurs at positions 633 and 639. The MAPRE1-binding signature appears at 653–656 (SFLP). Position 662 is a phosphoserine (serine 662). The segment covering 664-673 (PDTQPSQGPS) has biased composition (polar residues). Phosphothreonine is present on threonine 674. A KIF2C-binding region spans residues 711–736 (TPLALPTRDLNATFDLSEEPPSKPSF). Positions 767–798 (MKGPKPTSSLPGTSACKKKRVASSSVSHGRSR) are disordered. Short sequence motifs (MAPRE1-binding) lie at residues 774-777 (SSLP) and 800-803 (ARLP). Position 822 is a phosphoserine (serine 822).

Belongs to the TRAFAC class myosin-kinesin ATPase superfamily. Kinesin family. In terms of assembly, interacts with MAPRE1; this interaction is required for efficient accumulation at microtubule plus ends. Interacts with KIF2C at microtubule tips; this interaction increases the affinity of both partners for microtubule plus ends and is required for robust microtubule depolymerization. KIF2C phosphorylation by AURKA or AURKB strongly reduces KIF18B-binding. As to expression, shows a prominent expression in the amygdala.

The protein resides in the nucleus. It localises to the cytoplasm. Its subcellular location is the cytoskeleton. In terms of biological role, in complex with KIF2C, constitutes the major microtubule plus-end depolymerizing activity in mitotic cells. Its major role may be to transport KIF2C and/or MAPRE1 along microtubules. The polypeptide is Kinesin-like protein KIF18B (KIF18B) (Homo sapiens (Human)).